The primary structure comprises 194 residues: Cysteine and glycine-rich protein 3 (194 aa).

The segment at 1–5 (MPNWG) is interaction with TCAP. Residues 10–61 (CGACEKTVYHAEEIQCNGRSFHKTCFHCMACRKALDSTTVAAHESEIYCKVC) form the LIM zinc-binding 1 domain. The Nuclear localization signal motif lies at 64-69 (RRYGPK). The interaction with CLF2 and isoform 2 stretch occupies residues 94 to 105 (QSPKPARSVTTS). A phosphoserine mark is found at Ser-95 and Ser-153. Positions 120–171 (CPRCGKSVYAAEKVMGGGKPWHKTCFRCAICGKSLESTNVTDKDGELYCKVC) constitute an LIM zinc-binding 2 domain.

Self-associates. Oligomeric in the cytoplasm and monomeric in the nucleus. Homooligomers preferentially form along the actin cytoskeleton. Isoform 2 interacts with isoform 1. Isoform 1 but not isoform 2 interacts with MYOD1 and MYOG. Isoform 1 interacts with TCAP, ACTN2 and NRAP. Isoform 2 interacts with TCAP and alpha-actinin. Interacts with LDHD. Interacts (via N-terminus)with GLRX3 (via C-terminus) and PPP3CA; GLRX3 and calcineurin compete for interaction with CSRP3. Interacts with MYF6. Interacts with CFL2; the stoichiometry influences F-actin depolymerization and possibly two molecules of CFL2 can interact with one molecule of CSRP3 resulting in the highest functional impact; the interaction is stronger with phosphorylated CFL2. Post-translationally, phosphorylated by PKC/PRKCA. In terms of tissue distribution, cardiac and slow-twitch skeletal muscles. Isoform 2 is expressed in striated muscle. Isoform 2 is specifically expressed at higher levels in patients with neuromuscular diseases, such as limb-girdle muscular dystrophy 2A (LGMD2A), Duchenne muscular dystrophy (DMD) and dermatomyositis.

It localises to the nucleus. The protein localises to the cytoplasm. It is found in the cytoskeleton. Its subcellular location is the myofibril. The protein resides in the sarcomere. It localises to the z line. Functionally, positive regulator of myogenesis. Acts as a cofactor for myogenic bHLH transcription factors such as MYOD1, and probably MYOG and MYF6. Enhances the DNA-binding activity of the MYOD1:TCF3 isoform E47 complex and may promote formation of a functional MYOD1:TCF3 isoform E47:MEF2A complex involved in myogenesis. Plays a crucial and specific role in the organization of cytosolic structures in cardiomyocytes. Could play a role in mechanical stretch sensing. May be a scaffold protein that promotes the assembly of interacting proteins at Z-line structures. It is essential for calcineurin anchorage to the Z line. Required for stress-induced calcineurin-NFAT activation. The role in regulation of cytoskeleton dynamics by association with CFL2 is reported conflictingly: Shown to enhance CFL2-mediated F-actin depolymerization dependent on the CSRP3:CFL2 molecular ratio, and also shown to reduce the ability of CLF1 and CFL2 to enhance actin depolymerization. Proposed to contribute to the maintenance of muscle cell integrity through an actin-based mechanism. Can directly bind to actin filaments, cross-link actin filaments into bundles without polarity selectivity and protect them from dilution- and cofilin-mediated depolymerization; the function seems to involve its self-association. In vitro can inhibit PKC/PRKCA activity. Proposed to be involved in cardiac stress signaling by down-regulating excessive PKC/PRKCA signaling. In terms of biological role, may play a role in early sarcomere organization. Overexpression in myotubes negatively regulates myotube differentiation. By association with isoform 1 and thus changing the CSRP3 isoform 1:CFL2 stoichiometry is proposed to down-regulate CFL2-mediated F-actin depolymerization. The protein is Cysteine and glycine-rich protein 3 (CSRP3) of Homo sapiens (Human).